Here is a 97-residue protein sequence, read N- to C-terminus: Large ribosomal subunit protein bL36m (97 aa).

It belongs to the bacterial ribosomal protein bL36 family. As to quaternary structure, component of the mitochondrial ribosome large subunit (39S) which comprises a 16S rRNA and about 50 distinct proteins.

It localises to the mitochondrion. The protein is Large ribosomal subunit protein bL36m (Mrpl36) of Rattus norvegicus (Rat).